We begin with the raw amino-acid sequence, 350 residues long: 2,5-dihydroxypyridine 5,6-dioxygenase (350 aa).

Residues H265, H318, and D320 each contribute to the Fe cation site.

Fe(2+) is required as a cofactor.

The enzyme catalyses 2,5-dihydroxypyridine + O2 = N-formylmaleamate + H(+). The protein operates within cofactor degradation; nicotinate degradation. Functionally, catalyzes the dioxygenolytic ring cleavage of 2,5-dihydroxypyridine between carbons 5 and 6 generating N-formylmaleamate in the aerobic nicotinate degradation pathway. The chain is 2,5-dihydroxypyridine 5,6-dioxygenase (nicX) from Pseudomonas putida (strain ATCC 47054 / DSM 6125 / CFBP 8728 / NCIMB 11950 / KT2440).